A 106-amino-acid chain; its full sequence is Guanylate cyclase activator 2B (106 aa).

An N-terminal signal peptide occupies residues 1 to 21 (MSRSQLWAAVVLLLLLQSAQG). The propeptide occupies 22-91 (VYIKYHGFQV…STFKALRTIA (70 aa)). 3 disulfides stabilise this stretch: Cys62/Cys75, Cys95/Cys103, and Cys98/Cys106.

Belongs to the guanylin family. In terms of tissue distribution, localized predominantly in intestinal villi and the corticomedullary junction of the kidney.

The protein localises to the secreted. Functionally, endogenous activator of intestinal guanylate cyclase. It stimulates this enzyme through the same receptor binding region as the heat-stable enterotoxins. May be a potent physiological regulator of intestinal fluid and electrolyte transport. May be an autocrine/paracrine regulator of intestinal salt and water transport. This is Guanylate cyclase activator 2B (Guca2b) from Mus musculus (Mouse).